Here is a 32-residue protein sequence, read N- to C-terminus: Calcitonin-2 (32 aa).

Cys-1 and Cys-7 form a disulfide bridge. Residue Pro-32 is modified to Proline amide.

The protein belongs to the calcitonin family.

Its subcellular location is the secreted. Causes a rapid but short-lived drop in the level of calcium and phosphate in blood by promoting the incorporation of those ions in the bones. The sequence is that of Calcitonin-2 from Oncorhynchus gorbuscha (Pink salmon).